The sequence spans 575 residues: Centrosomal protein POC5 (575 aa).

Positions 1–26 (MSSDEEKYSLPVVQNDSSRGSSVSSN) are disordered. Phosphoserine is present on residues S105 and S109. Residues 142-173 (HEILVSDFLVSDENLQKMENVLDLWSSGLKTN) form a Centrin-binding (CBR) 1 repeat. Residues 191–222 (MEMRKEKEKHAAHLKQLCNQINELKELQKTFE) are a coiled coil. 2 Centrin-binding (CBR) repeats span residues 231-262 (VISS…HVRA) and 263-295 (RQDV…VQKQ). Positions 316 to 355 (SNDYEAKVAMLSGALENAKAEIQRMQHEKEHFEDSMKKAF) form a coiled coil. Disordered regions lie at residues 376-411 (AGID…MPLP) and 538-575 (KYPR…KVVD). Residues 382-400 (NNKKEEYGPGVQGKEHSAH) show a composition bias toward basic and acidic residues. An N6-acetyllysine modification is found at K538. Positions 545 to 569 (PESSTSASRSLGTRSAHTQSLTSVH) are enriched in polar residues. Residue S564 is modified to Phosphoserine.

The protein belongs to the POC5 family. In terms of assembly, interacts with CETN2 and CETN3. Forms a microtubule-associated complex with POC1B, CETN2 and FAM161A. Interacts with CCDC15. Hyperphosphorylated during recruitment to procentrioles in G2/M phase.

Its subcellular location is the cytoplasm. The protein localises to the cytoskeleton. The protein resides in the microtubule organizing center. It localises to the centrosome. It is found in the centriole. Functionally, essential for the assembly of the distal half of centrioles, required for centriole elongation. Acts as a negative regulator of centriole elongation. This Homo sapiens (Human) protein is Centrosomal protein POC5 (POC5).